We begin with the raw amino-acid sequence, 159 residues long: Small ribosomal subunit protein uS17 (159 aa).

The protein belongs to the universal ribosomal protein uS17 family.

The protein resides in the cytoplasm. The sequence is that of Small ribosomal subunit protein uS17 (RPS11) from Zea mays (Maize).